The chain runs to 162 residues: E3 ubiquitin-protein ligase LAP (162 aa).

Over 1-78 the chain is Cytoplasmic; that stretch reads MEGSDNTNTH…RWKCSFMYCN (78 aa). The RING-CH-type zinc-finger motif lies at 3 to 61; the sequence is GSDNTNTHCWICKDEYNVSTNFCNCKNEFKIVHKNCLEEWINFSHNTKCKICNGKYNIK. 8 residues coordinate Zn(2+): C11, C14, C25, C27, H35, C38, C51, and C54. Residues 79–99 form a helical membrane-spanning segment; it reads VPAICVSLICLLLLPLTILLV. Topologically, residues 100–121 are lumenal; that stretch reads KFNLKSMLENIENRDLIALISA. The chain crosses the membrane as a helical span at residues 122 to 142; it reads MAYSLPCVVGFITVVHILIAL. The Cytoplasmic segment spans residues 143-162; it reads YDYYLAAKSDNTTYQVYEYI.

This sequence belongs to the poxviridae LAP protein family.

Its subcellular location is the host membrane. It is found in the host Golgi apparatus. It localises to the host trans-Golgi network membrane. The protein localises to the host early endosome membrane. The enzyme catalyses S-ubiquitinyl-[E2 ubiquitin-conjugating enzyme]-L-cysteine + [acceptor protein]-L-lysine = [E2 ubiquitin-conjugating enzyme]-L-cysteine + N(6)-ubiquitinyl-[acceptor protein]-L-lysine.. Functionally, E3 ubiquitin-protein ligase which promotes ubiquitination and subsequent degradation of host MHC-I and CD4 molecules, presumably to prevent lysis of infected cells by cytotoxic T-lymphocytes and NK cell. Binds target molecules through transmembrane interaction. The result of this ubiquitination is the enhancement of the endocytosis of the target chain and the delivery to the lysosome, where it is proteolytically destroyed. This is E3 ubiquitin-protein ligase LAP (LW010) from Lumpy skin disease virus (LSDV).